We begin with the raw amino-acid sequence, 179 residues long: Crossover junction endodeoxyribonuclease RuvC (179 aa).

Active-site residues include Asp-14, Glu-74, and Asp-147. Mg(2+) contacts are provided by Asp-14, Glu-74, and Asp-147.

The protein belongs to the RuvC family. As to quaternary structure, homodimer which binds Holliday junction (HJ) DNA. The HJ becomes 2-fold symmetrical on binding to RuvC with unstacked arms; it has a different conformation from HJ DNA in complex with RuvA. In the full resolvosome a probable DNA-RuvA(4)-RuvB(12)-RuvC(2) complex forms which resolves the HJ. It depends on Mg(2+) as a cofactor.

It is found in the cytoplasm. It catalyses the reaction Endonucleolytic cleavage at a junction such as a reciprocal single-stranded crossover between two homologous DNA duplexes (Holliday junction).. Its function is as follows. The RuvA-RuvB-RuvC complex processes Holliday junction (HJ) DNA during genetic recombination and DNA repair. Endonuclease that resolves HJ intermediates. Cleaves cruciform DNA by making single-stranded nicks across the HJ at symmetrical positions within the homologous arms, yielding a 5'-phosphate and a 3'-hydroxyl group; requires a central core of homology in the junction. The consensus cleavage sequence is 5'-(A/T)TT(C/G)-3'. Cleavage occurs on the 3'-side of the TT dinucleotide at the point of strand exchange. HJ branch migration catalyzed by RuvA-RuvB allows RuvC to scan DNA until it finds its consensus sequence, where it cleaves and resolves the cruciform DNA. The polypeptide is Crossover junction endodeoxyribonuclease RuvC (Rubrobacter xylanophilus (strain DSM 9941 / JCM 11954 / NBRC 16129 / PRD-1)).